The chain runs to 258 residues: Imidazole glycerol phosphate synthase subunit HisF (258 aa).

Residues Asp-11 and Asp-130 contribute to the active site.

The protein belongs to the HisA/HisF family. As to quaternary structure, heterodimer of HisH and HisF.

The protein localises to the cytoplasm. It catalyses the reaction 5-[(5-phospho-1-deoxy-D-ribulos-1-ylimino)methylamino]-1-(5-phospho-beta-D-ribosyl)imidazole-4-carboxamide + L-glutamine = D-erythro-1-(imidazol-4-yl)glycerol 3-phosphate + 5-amino-1-(5-phospho-beta-D-ribosyl)imidazole-4-carboxamide + L-glutamate + H(+). It participates in amino-acid biosynthesis; L-histidine biosynthesis; L-histidine from 5-phospho-alpha-D-ribose 1-diphosphate: step 5/9. IGPS catalyzes the conversion of PRFAR and glutamine to IGP, AICAR and glutamate. The HisF subunit catalyzes the cyclization activity that produces IGP and AICAR from PRFAR using the ammonia provided by the HisH subunit. In Nitrobacter winogradskyi (strain ATCC 25391 / DSM 10237 / CIP 104748 / NCIMB 11846 / Nb-255), this protein is Imidazole glycerol phosphate synthase subunit HisF.